Reading from the N-terminus, the 348-residue chain is MSSSQDKANLPANNSRARAKKLVLELQDEICAGLETIDGEGKFLEESWERPEGGGGRSRVLKDGKIFEQGGVNFSEVHGNELPPSIISQRPEAKGHSWFATGTSMVLHPKNPYIPTVHLNYRYFEAGPVWWFGGGADLTPFYPYLSDTRHFHSCHKNACDTIDKDLHKVFKPWCDEYFFLKHRNETRGVGGIFYDYQDGSGLLYKGQNANGKASKIAKELGEYSLNWENLFSLAKACGQAFLPSYEPIIKKRKNQSFSTKERDFQLYRRGRYAEFNLVWDRGTIFGLQTNGRTESILMSLPPLARWEYGYKPEENSREALLTDLFTKPQDWFTDKSLEKRCLTHQALD.

Ser-104 is a substrate binding site. A divalent metal cation is bound by residues His-108 and His-118. The Proton donor role is filled by His-118. Substrate is bound at residue 120–122; that stretch reads NYR. Positions 152 and 182 each coordinate a divalent metal cation. Residues 272–307 form an important for dimerization region; it reads YAEFNLVWDRGTIFGLQTNGRTESILMSLPPLARWE.

The protein belongs to the aerobic coproporphyrinogen-III oxidase family. Homodimer. A divalent metal cation is required as a cofactor.

Its subcellular location is the cytoplasm. The catalysed reaction is coproporphyrinogen III + O2 + 2 H(+) = protoporphyrinogen IX + 2 CO2 + 2 H2O. It participates in porphyrin-containing compound metabolism; protoporphyrin-IX biosynthesis; protoporphyrinogen-IX from coproporphyrinogen-III (O2 route): step 1/1. Involved in the heme and chlorophyll biosynthesis. Catalyzes the aerobic oxidative decarboxylation of propionate groups of rings A and B of coproporphyrinogen-III to yield the vinyl groups in protoporphyrinogen-IX. The sequence is that of Oxygen-dependent coproporphyrinogen-III oxidase from Prochlorococcus marinus (strain NATL1A).